Consider the following 477-residue polypeptide: Aspartyl/glutamyl-tRNA(Asn/Gln) amidotransferase subunit B (477 aa).

It belongs to the GatB/GatE family. GatB subfamily. In terms of assembly, heterotrimer of A, B and C subunits.

It catalyses the reaction L-glutamyl-tRNA(Gln) + L-glutamine + ATP + H2O = L-glutaminyl-tRNA(Gln) + L-glutamate + ADP + phosphate + H(+). The catalysed reaction is L-aspartyl-tRNA(Asn) + L-glutamine + ATP + H2O = L-asparaginyl-tRNA(Asn) + L-glutamate + ADP + phosphate + 2 H(+). Allows the formation of correctly charged Asn-tRNA(Asn) or Gln-tRNA(Gln) through the transamidation of misacylated Asp-tRNA(Asn) or Glu-tRNA(Gln) in organisms which lack either or both of asparaginyl-tRNA or glutaminyl-tRNA synthetases. The reaction takes place in the presence of glutamine and ATP through an activated phospho-Asp-tRNA(Asn) or phospho-Glu-tRNA(Gln). The chain is Aspartyl/glutamyl-tRNA(Asn/Gln) amidotransferase subunit B from Methylobacillus flagellatus (strain ATCC 51484 / DSM 6875 / VKM B-1610 / KT).